The primary structure comprises 491 residues: Immediate early protein IE1 (491 aa).

Positions 1–11 (MESSAKRKMDP) are enriched in basic and acidic residues. Residues 1 to 24 (MESSAKRKMDPDNPDEGPSSKVPR) form a nuclear localization signal region. The interval 1 to 30 (MESSAKRKMDPDNPDEGPSSKVPRPETPVT) is disordered. Residues 132–346 (ILDKVHEPFE…SVMKRRIEEI (215 aa)) form an interaction with host PML, interference with PML sumoylation and disruption of PML-associated nuclear bodies region. Positions 373 to 445 (AIAEESDEEE…EEGAQEERED (73 aa)) are interaction with host STAT2. The segment at 410–420 (ATIPLSSVIVA) is modulation of STAT3/STAT1 signaling. The tract at residues 410 to 445 (ATIPLSSVIVAENSDQEESEQSDEEEEEGAQEERED) is interaction with host STAT3. Residues 421-472 (ENSDQEESEQSDEEEEEGAQEEREDTVSVKSEPVSEIEEVAPEEEEDGAEEP) are acidic. The segment at 421 to 491 (ENSDQEESEQ…PMVTRSKADQ (71 aa)) is disordered. The span at 423–444 (SDQEESEQSDEEEEEGAQEERE) shows a compositional bias: acidic residues. An interaction with host SUMO1 region spans residues 449-452 (VKSE). A Glycyl lysine isopeptide (Lys-Gly) (interchain with G-Cter in SUMO) cross-link involves residue lysine 450. Over residues 455–470 (SEIEEVAPEEEEDGAE) the composition is skewed to acidic residues. A chromosome-tethering domain (CTD), binding to histones region spans residues 475-491 (SGGKSTHPMVTRSKADQ).

The protein belongs to the HHV-5 IE1 protein family. As to quaternary structure, forms homodimers. Interacts with human p53/TP53; this interaction inhibits p53/TP53-dependent transactivation activity. Interacts with host STAT1. Interacts with host STAT2; this interaction promotes viral growth and counteracts the antiviral interferon response. May also interact with the host STAT1-STAT2 heterodimer. Interacts with host STAT3; this interaction leads to STAT3 nuclear accumulation and disruption of IL6-induced STAT3 phosphorylation. Interacts with host PML; this interaction inhibits host PML de novo sumoylation and probably inhibits PML regulation of type I and type II interferon-induced gene expression. Interacts with host DAXX. Interacts with host SP100. Interacts with host E2F1. Interacts with host RB1. Interacts with host HDAC1; this interaction inhibits histone deacetylation and promotes viral transcription. Interacts with host HDAC2; this interaction inhibits histone deacetylation and promotes viral transcription. Interacts with host HDAC3; this interaction inhibits histone deacetylation and promotes viral transcription. Interacts with host PLSCR1; this interaction inhibits IE1 transactivating activity. Sumoylated by host PML/nuclear domain 10. Sumoylation abolishes the interaction with host STAT2 and thus the IE1-mediated repression of interferon-stimulated genes.

It is found in the host nucleus. Functionally, plays an important role in transactivating viral early genes as well as activating its own promoter, probably by altering the viral chromatin structure. Expression of IE1 and IE2 proteins is critical for the establishment of lytic infection and reactivation from viral latency. Disrupts PML-associated ND10 nuclear bodies by interfering with host PML and SP100 sumoylation thereby altering the regulation of type I and type II interferon-induced gene expression. Promotes efficient viral growth by interacting with and directing host SP100 to degradation, leading to enhanced acetylation level of histones. In addition, functions in counteracting the host innate antiviral response. Inhibits the type I interferon pathway by directly interacting with and sequestrating host STAT2. Also targets type II interferon pathway by repressing IL6- and STAT3 target genes. Repression of STAT3 genes is due to STAT3 nuclear accumulation and disruption of IL6-induced STAT3 phosphorylation by IE1. This repression is followed by phosphorylation and activation of STAT1. Inhibits host ISG transcription by sequestering host ISGF3 in a PML- and STAT2- binding dependent manner. Alters host cell cycle progression, probably through its interaction with host E2F1 or RB1 that overcomes the RB1-mediated repression of E2F-responsive promoters. May act as a E3 ubiquitin ligase targeting several host proteins including HES1 and SP100A for ubiquitination and subsequent proteasomal degradation. Impairs the radial migration of immature neurons by downregulating Gap junction alpha-1 protein/GJA1 also via ubiquitination and degradation. This chain is Immediate early protein IE1 (UL123), found in Human cytomegalovirus (strain Towne) (HHV-5).